Consider the following 134-residue polypeptide: MSRRKARETAFKVVFQVDQVQADAKKAFDYLVLHDKLAEKNQGFSWDLIQGTLEKQAEIDQMIASYSREWALDRMSSVDRNIMRVAAYEILYLEDSQAVVAIDEAIEIAKKYGDEGSGSFVNAILDKILGEKNG.

It belongs to the NusB family.

In terms of biological role, involved in transcription antitermination. Required for transcription of ribosomal RNA (rRNA) genes. Binds specifically to the boxA antiterminator sequence of the ribosomal RNA (rrn) operons. This chain is Transcription antitermination protein NusB, found in Syntrophomonas wolfei subsp. wolfei (strain DSM 2245B / Goettingen).